Reading from the N-terminus, the 227-residue chain is Prolactin (227 aa).

Residues 1–28 (MNIKGSPWKGSLLLLLVSNLLLCQNVAP) form the signal peptide. C32 and C39 form a disulfide bridge. S54 bears the Phosphoserine mark. The N-linked (GlcNAc...) asparagine glycan is linked to N59. Phosphoserine occurs at positions 62 and 118. Disulfide bonds link C86–C202 and C219–C227.

Belongs to the somatotropin/prolactin family. As to quaternary structure, interacts with PRLR.

The protein resides in the secreted. Prolactin acts primarily on the mammary gland by promoting lactation. The chain is Prolactin (PRL) from Macaca mulatta (Rhesus macaque).